The primary structure comprises 266 residues: Esterase AGAP003155 (266 aa).

Catalysis depends on charge relay system residues Ser114, Asp172, and His199. Residues Ala231–Asp266 are disordered.

Belongs to the LovG family.

The polypeptide is Esterase AGAP003155 (Anopheles gambiae (African malaria mosquito)).